We begin with the raw amino-acid sequence, 162 residues long: uncharacterized protein (162 aa).

A helical membrane pass occupies residues 5–25; that stretch reads IIILFLFTAILCSITLCGCIS.

It localises to the membrane. This is an uncharacterized protein from Methanocaldococcus jannaschii (strain ATCC 43067 / DSM 2661 / JAL-1 / JCM 10045 / NBRC 100440) (Methanococcus jannaschii).